The primary structure comprises 291 residues: Elongation factor Ts (291 aa).

The segment at 79–82 (TDFV) is involved in Mg(2+) ion dislocation from EF-Tu.

The protein belongs to the EF-Ts family.

Its subcellular location is the cytoplasm. Associates with the EF-Tu.GDP complex and induces the exchange of GDP to GTP. It remains bound to the aminoacyl-tRNA.EF-Tu.GTP complex up to the GTP hydrolysis stage on the ribosome. This is Elongation factor Ts from Ruegeria pomeroyi (strain ATCC 700808 / DSM 15171 / DSS-3) (Silicibacter pomeroyi).